Consider the following 420-residue polypeptide: Exodeoxyribonuclease 7 large subunit (420 aa).

Belongs to the XseA family. Heterooligomer composed of large and small subunits.

The protein resides in the cytoplasm. The catalysed reaction is Exonucleolytic cleavage in either 5'- to 3'- or 3'- to 5'-direction to yield nucleoside 5'-phosphates.. Bidirectionally degrades single-stranded DNA into large acid-insoluble oligonucleotides, which are then degraded further into small acid-soluble oligonucleotides. The chain is Exodeoxyribonuclease 7 large subunit from Helicobacter acinonychis (strain Sheeba).